Consider the following 230-residue polypeptide: UPF0173 metal-dependent hydrolase Sca_1312 (230 aa).

It belongs to the UPF0173 family.

In Staphylococcus carnosus (strain TM300), this protein is UPF0173 metal-dependent hydrolase Sca_1312.